The chain runs to 102 residues: Small ribosomal subunit protein uS10 (102 aa).

This sequence belongs to the universal ribosomal protein uS10 family. As to quaternary structure, part of the 30S ribosomal subunit.

In terms of biological role, involved in the binding of tRNA to the ribosomes. The sequence is that of Small ribosomal subunit protein uS10 from Moorella thermoacetica (strain ATCC 39073 / JCM 9320).